Reading from the N-terminus, the 199-residue chain is UPF0637 protein LACR_1918 (199 aa).

Belongs to the UPF0637 family.

This is UPF0637 protein LACR_1918 from Lactococcus lactis subsp. cremoris (strain SK11).